Consider the following 737-residue polypeptide: Polyribonucleotide nucleotidyltransferase (737 aa).

Residues D489 and D495 each contribute to the Mg(2+) site. In terms of domain architecture, KH spans 556–615 (PKIDTIKIDVDKIKIVIGKGGETIDKIIAETGVKIDIDEEGNVSIYSSDQDAINRAKEII). Positions 625–693 (DEVYRAKVVR…EKGRIDASMK (69 aa)) constitute an S1 motif domain. The interval 691–737 (SMKALLPRPPKPEHDEKGEKSERPHRPRHHKDHKPKKEFTETPKDSE) is disordered. A compositionally biased stretch (basic and acidic residues) spans 700-714 (PKPEHDEKGEKSERP). The span at 715–724 (HRPRHHKDHK) shows a compositional bias: basic residues. A compositionally biased stretch (basic and acidic residues) spans 725-737 (PKKEFTETPKDSE).

The protein belongs to the polyribonucleotide nucleotidyltransferase family. Requires Mg(2+) as cofactor.

The protein localises to the cytoplasm. It catalyses the reaction RNA(n+1) + phosphate = RNA(n) + a ribonucleoside 5'-diphosphate. Functionally, involved in mRNA degradation. Catalyzes the phosphorolysis of single-stranded polyribonucleotides processively in the 3'- to 5'-direction. This is Polyribonucleotide nucleotidyltransferase from Streptococcus pneumoniae serotype 19F (strain G54).